A 111-amino-acid chain; its full sequence is Nucleoid-associated protein SynRCC307_0025 (111 aa).

This sequence belongs to the YbaB/EbfC family. Homodimer.

The protein localises to the cytoplasm. The protein resides in the nucleoid. Its function is as follows. Binds to DNA and alters its conformation. May be involved in regulation of gene expression, nucleoid organization and DNA protection. This is Nucleoid-associated protein SynRCC307_0025 from Synechococcus sp. (strain RCC307).